The following is an 88-amino-acid chain: Phosphocarrier protein HPr (88 aa).

One can recognise an HPr domain in the interval 1–88 (MKKIQVVVKD…KAVLEKHQVI (88 aa)). The active-site Pros-phosphohistidine intermediate is the H15. Residue S47 is modified to Phosphoserine; by HPrK/P.

It belongs to the HPr family.

It is found in the cytoplasm. Phosphorylation on Ser-47 inhibits the phosphoryl transfer from enzyme I to HPr. Functionally, general (non sugar-specific) component of the phosphoenolpyruvate-dependent sugar phosphotransferase system (sugar PTS). This major carbohydrate active-transport system catalyzes the phosphorylation of incoming sugar substrates concomitantly with their translocation across the cell membrane. The phosphoryl group from phosphoenolpyruvate (PEP) is transferred to the phosphoryl carrier protein HPr by enzyme I. Phospho-HPr then transfers it to the PTS EIIA domain. P-Ser-HPr interacts with the catabolite control protein A (CcpA), forming a complex that binds to DNA at the catabolite response elements cre, operator sites preceding a large number of catabolite-regulated genes. Thus, P-Ser-HPr is a corepressor in carbon catabolite repression (CCR), a mechanism that allows bacteria to coordinate and optimize the utilization of available carbon sources. P-Ser-HPr also plays a role in inducer exclusion, in which it probably interacts with several non-PTS permeases and inhibits their transport activity. The polypeptide is Phosphocarrier protein HPr (ptsH) (Mycoplasma pneumoniae (strain ATCC 29342 / M129 / Subtype 1) (Mycoplasmoides pneumoniae)).